Here is a 354-residue protein sequence, read N- to C-terminus: RH-like protein (354 aa).

Helical transmembrane passes span 11-31 (GCLPLWALTLEAALILLFFFF), 45-65 (VATYQVGQDLTVMAALGLGFL), 77-97 (VAFNLFMLALGVQWAILLDGF), 125-145 (ISVGAVLGKVNLVQLVVMVLV), 167-187 (VNIMHIHVFAAYFGLTVAWCL), 209-229 (AMLGALFLWIFWPSFNSALLT), 238-258 (VFNTYYALAVSTVTAISVSSL), and 287-307 (LISSPWLAMVLGLVAGLISIG).

The protein belongs to the ammonium transporter (TC 2.A.49) family. Rh subfamily.

The protein resides in the membrane. Functionally, may be part of an oligomeric complex which is likely to have a transport or channel function in the erythrocyte membrane. This is RH-like protein from Hylobates pileatus (Pileated gibbon).